The chain runs to 397 residues: Tryptophan synthase beta chain (397 aa).

Lys-88 is modified (N6-(pyridoxal phosphate)lysine).

The protein belongs to the TrpB family. As to quaternary structure, tetramer of two alpha and two beta chains. Pyridoxal 5'-phosphate serves as cofactor.

The enzyme catalyses (1S,2R)-1-C-(indol-3-yl)glycerol 3-phosphate + L-serine = D-glyceraldehyde 3-phosphate + L-tryptophan + H2O. It functions in the pathway amino-acid biosynthesis; L-tryptophan biosynthesis; L-tryptophan from chorismate: step 5/5. Its function is as follows. The beta subunit is responsible for the synthesis of L-tryptophan from indole and L-serine. In Haemophilus influenzae (strain PittEE), this protein is Tryptophan synthase beta chain.